A 92-amino-acid chain; its full sequence is Small ribosomal subunit protein uS19c (92 aa).

It belongs to the universal ribosomal protein uS19 family.

The protein resides in the plastid. Its subcellular location is the chloroplast. Protein S19 forms a complex with S13 that binds strongly to the 16S ribosomal RNA. The sequence is that of Small ribosomal subunit protein uS19c from Staurastrum punctulatum (Green alga).